Here is an 897-residue protein sequence, read N- to C-terminus: 3'-5' exonuclease DinG (897 aa).

Residues 8–161 (VVDLETTGNQ…DEDAATTAKL (154 aa)) form the Exonuclease domain. In terms of domain architecture, Helicase ATP-binding spans 241-496 (SKAVDQLGLT…KAIDQLEKQR (256 aa)). 276–283 (ASLGSGKS) serves as a coordination point for ATP. The short motif at 448–451 (DEAH) is the DEAH box element. The region spanning 703–893 (NIDEYVASIV…QFGKLLRQIQ (191 aa)) is the Helicase C-terminal domain.

The protein belongs to the helicase family. DinG subfamily. Type 2 sub-subfamily. Monomer in solution.

The nuclease activity is inhibited by ATP or ADP. In terms of biological role, 3'-5' exonuclease acting on single-stranded DNA (ssDNA) and RNA (ssRNA) substrates. Displays ssDNA-stimulated ATPase activity, but lacks helicase activity. In Staphylococcus aureus (strain MRSA252), this protein is 3'-5' exonuclease DinG.